Consider the following 191-residue polypeptide: Cytochrome b-245 light chain (191 aa).

The Cytoplasmic portion of the chain corresponds to 2–7; that stretch reads GQIEWA. Residues 8–30 traverse the membrane as a helical segment; the sequence is MWANEQALASGLILITGGIVATA. The Extracellular segment spans residues 31–35; sequence GQFTQ. A helical membrane pass occupies residues 36 to 53; sequence WYLGAYSIAAGVLVCLLE. Residues 54–69 are Cytoplasmic-facing; the sequence is YPRGKRSKGSTMERCG. Residues 70-80 lie within the membrane without spanning it; that stretch reads QKYLTRVVKLF. The Cytoplasmic portion of the chain corresponds to 81–86; the sequence is GPLTRN. A helical membrane pass occupies residues 87–104; it reads YYIRAFLHLGLAVPAGFL. Residue Leu-105 is a topological domain, extracellular. Residues 106-126 form a helical membrane-spanning segment; sequence ATILGTACLAIASGIYLLAAI. Residues 127–191 lie on the Cytoplasmic side of the membrane; the sequence is RGEQWSPIEP…NPMPVNDEVV (65 aa). The disordered stretch occupies residues 134–191; sequence IEPKPKERPQIGGTIKQPPSNPPPRPPAEARKKPSEEAAGVPTGGPQENPMPVNDEVV. Thr-147 carries the post-translational modification Phosphothreonine. Lys-149 is covalently cross-linked (Glycyl lysine isopeptide (Lys-Gly) (interchain with G-Cter in ubiquitin)). Ser-168 is subject to Phosphoserine.

This sequence belongs to the p22phox family. As to quaternary structure, component of the phagocyte NADPH oxidase core complex/cytochrome b558 complex, composed of CYBB (heavy chain (beta)) and CYBA (light chain (alpha)). Component of the phagocyte NADPH oxidase complex composed of an obligatory core heterodimer formed by the membrane proteins CYBA and CYBB and the cytosolic regulatory subunits NCF1/p47-phox, NCF2/p67-phox, NCF4/p40-phox and the small GTPase RAC1 or RAC2. Interacts with NCF1 (via SH3 domain). Interacts with SH3PXD2A. Interacts with DUOX1, DUOX2 and TPO. Interacts with NOX4; this interaction mediates superoxide generation. Interacts with calprotectin (S100A8/9). Interacts with GBP7. Interacts with NOXO1. Forms a heterodimer with NOX3 and is essential for activity and cell membrane localization of NOX3. Interacts with NOX1. In terms of processing, phosphorylation at Thr-147 enhances NADPH oxidase activity by promoting NCF1/p47-phox binding. Ubiquitinated at Lys-149 likely by RNF145.

It localises to the cell membrane. Subunit of NADPH oxidase complexes that is required for the NADPH oxidase activity that generates, in various cell types, superoxide from molecular oxygen utilizing NADPH as an electron donor. Subunit of the phagocyte NADPH oxidase complex that mediates the transfer of electrons from cytosolic NADPH to O2 to produce the superoxide anion (O2(-)). In the activated complex, electrons are first transferred from NADPH to flavin adenine dinucleotide (FAD) and subsequently transferred via two heme molecules to molecular oxygen, producing superoxide through an outer-sphere reaction. Activation of the NADPH oxidase complex is initiated by the assembly of cytosolic subunits of the NADPH oxidase complex with the core NADPH oxidase complex to form a complex at the plasma membrane or phagosomal membrane. This activation process is initiated by phosphorylation dependent binding of the cytosolic NCF1/p47-phox subunit to the C-terminus of CYBA/p22-phox. Aassociates with NOX3 to form a functional NADPH oxidase constitutively generating superoxide. The sequence is that of Cytochrome b-245 light chain from Bos taurus (Bovine).